The sequence spans 326 residues: Vestitone reductase (326 aa).

NADP(+) contacts are provided by residues 12–18 (GGTGFLG), Arg37, and Tyr164.

This sequence belongs to the NAD(P)-dependent epimerase/dehydratase family. Dihydroflavonol-4-reductase subfamily. Monomer. In terms of tissue distribution, detected in roots, and at lower levels in root nodules. Not detected in petioles, leaf and stem.

It catalyses the reaction a (3R,4R)-4,2'-dihydroxyisoflavan + NADP(+) = a (3R)-2'-hydroxyisoflavanone + NADPH + H(+). Inhibited by vestitone concentrations above 50 uM. Functionally, stereospecific enzyme that catalyzes the NADPH-dependent reduction of (3R)-vestitone to (3R,4R)-4'-methoxyisoflavan-2',4,7-triol (DMI). Has no activity with (3S)-vestitone. Catalyzes the penultimate step in the biosynthesis of the phytoalexin medicarpin, and thereby contributes to plant defense reactions. The chain is Vestitone reductase from Medicago sativa (Alfalfa).